The primary structure comprises 503 residues: Probable cytosol aminopeptidase (503 aa).

Residues Lys-274 and Asp-279 each coordinate Mn(2+). Lys-286 is a catalytic residue. Mn(2+)-binding residues include Asp-297, Asp-356, and Glu-358. Arg-360 is an active-site residue.

This sequence belongs to the peptidase M17 family. Mn(2+) serves as cofactor.

It is found in the cytoplasm. The enzyme catalyses Release of an N-terminal amino acid, Xaa-|-Yaa-, in which Xaa is preferably Leu, but may be other amino acids including Pro although not Arg or Lys, and Yaa may be Pro. Amino acid amides and methyl esters are also readily hydrolyzed, but rates on arylamides are exceedingly low.. It carries out the reaction Release of an N-terminal amino acid, preferentially leucine, but not glutamic or aspartic acids.. Functionally, presumably involved in the processing and regular turnover of intracellular proteins. Catalyzes the removal of unsubstituted N-terminal amino acids from various peptides. This chain is Probable cytosol aminopeptidase, found in Burkholderia lata (strain ATCC 17760 / DSM 23089 / LMG 22485 / NCIMB 9086 / R18194 / 383).